A 274-amino-acid chain; its full sequence is Formamidopyrimidine-DNA glycosylase (274 aa).

Proline 2 functions as the Schiff-base intermediate with DNA in the catalytic mechanism. Glutamate 3 functions as the Proton donor in the catalytic mechanism. Lysine 58 functions as the Proton donor; for beta-elimination activity in the catalytic mechanism. The DNA site is built by histidine 91 and arginine 110. The FPG-type zinc finger occupies 238 to 272 (QVYDKTGQECVRCGTIIEKIQLGGRGTHFCPNCQR). The active-site Proton donor; for delta-elimination activity is arginine 262.

The protein belongs to the FPG family. As to quaternary structure, monomer. Requires Zn(2+) as cofactor.

The catalysed reaction is Hydrolysis of DNA containing ring-opened 7-methylguanine residues, releasing 2,6-diamino-4-hydroxy-5-(N-methyl)formamidopyrimidine.. It catalyses the reaction 2'-deoxyribonucleotide-(2'-deoxyribose 5'-phosphate)-2'-deoxyribonucleotide-DNA = a 3'-end 2'-deoxyribonucleotide-(2,3-dehydro-2,3-deoxyribose 5'-phosphate)-DNA + a 5'-end 5'-phospho-2'-deoxyribonucleoside-DNA + H(+). Involved in base excision repair of DNA damaged by oxidation or by mutagenic agents. Acts as a DNA glycosylase that recognizes and removes damaged bases. Has a preference for oxidized purines, such as 7,8-dihydro-8-oxoguanine (8-oxoG). Has AP (apurinic/apyrimidinic) lyase activity and introduces nicks in the DNA strand. Cleaves the DNA backbone by beta-delta elimination to generate a single-strand break at the site of the removed base with both 3'- and 5'-phosphates. The polypeptide is Formamidopyrimidine-DNA glycosylase (Streptococcus pneumoniae (strain ATCC BAA-255 / R6)).